The sequence spans 195 residues: 3-isopropylmalate dehydratase small subunit (195 aa).

This sequence belongs to the LeuD family. LeuD type 1 subfamily. In terms of assembly, heterodimer of LeuC and LeuD.

It carries out the reaction (2R,3S)-3-isopropylmalate = (2S)-2-isopropylmalate. It functions in the pathway amino-acid biosynthesis; L-leucine biosynthesis; L-leucine from 3-methyl-2-oxobutanoate: step 2/4. In terms of biological role, catalyzes the isomerization between 2-isopropylmalate and 3-isopropylmalate, via the formation of 2-isopropylmaleate. In Salinispora tropica (strain ATCC BAA-916 / DSM 44818 / JCM 13857 / NBRC 105044 / CNB-440), this protein is 3-isopropylmalate dehydratase small subunit.